The following is a 552-amino-acid chain: Autoimmune regulator (552 aa).

The region spanning 1–106 is the HSR domain; the sequence is MAGGDGMLRR…ILDGFPKDVD (106 aa). 2 short sequence motifs (LXXLL motif) span residues 8-12 and 64-68; these read LRRLL and LSWLL. The segment at 109 to 177 is disordered; sequence QSRKGRKPLA…DGNLESQHLP (69 aa). A Nuclear localization signal motif is present at residues 114–134; the sequence is RKPLAGPKAAVLPPRPPTKRK. The SAND domain occupies 182-282; sequence IQTMAASVQR…QKVGQQCGVP (101 aa). A PHD-type 1 zinc finger spans residues 298–345; sequence EDECAVCHDGGELICCDGCPRAFHLACLSPPLQEIPSGLWRCSCCLQG. Residues 414–418 carry the LXXLL motif 3 motif; the sequence is LCPLL. Residues 434–475 form a PHD-type 2 zinc finger; sequence CSVCGDGTEVLRCAHCAAAFHWRCHFPTAAARPGTNLRCKSC. Residues 472–514 are disordered; it reads CKSCSADSTPTPGTPGEAVPTSGPRPAPGLAKVGDDSASHDPV. Residues 504–514 are compositionally biased toward basic and acidic residues; that stretch reads VGDDSASHDPV. Residues 520-524 carry the LXXLL motif 4 motif; it reads LESLL.

In terms of assembly, homodimer and homotetramer. Interacts with CREBBP. Interacts preferentially with histone H3 that is not methylated at 'Lys-4'. Binds with lower affinity to histone H3 that is monomethylated at 'Lys-4'. Trimethylation of histone H3 at 'Lys-4' or phosphorylation at 'Thr-3' abolish the interaction. Binds with lower affinity to histone H3 that is acetylated at 'Lys-4', or that is acetylated at 'Lys-9' or trimethylated at 'Lys-9'. Binds histone H3 that is dimethylated at 'Arg-2' with very low affinity. In terms of processing, phosphorylated. In terms of tissue distribution, highly expressed in a few cells in the medulla of the thymus (medullary epithelial cells) (at protein level). Expressed in thymic but no peripheral B-cells. In secondary lymphoid organs, expressed in a discrete population of bone marrow-derived toleregenic antigen presenting cells (APCs) called extrathymic AIRE expressing cells (eTAC)(at protein level). Detected at very low levels in thymus, lymph node, liver, brain, ovary, lung, testis, kidney, heart, spleen, bone marrow, skeletal muscle and adrenal gland. Isoforms 1a to 1d predominate, isoforms 2a to 2d are intermediate and isoforms 3a to 3d are expressed at extremely low levels.

It localises to the nucleus. The protein resides in the cytoplasm. Transcription factor playing an essential role to promote self-tolerance in the thymus by regulating the expression of a wide array of self-antigens that have the commonality of being tissue-restricted in their expression pattern in the periphery, called tissue restricted antigens (TRA). Binds to G-doublets in an A/T-rich environment; the preferred motif is a tandem repeat of 5'-. ATTGGTTA-3' combined with a 5'-TTATTA-3' box. Binds to nucleosomes. Binds to chromatin and interacts selectively with histone H3 that is not methylated at 'Lys-4', not phosphorylated at 'Thr-3' and not methylated at 'Arg-2'. Functions as a sensor of histone H3 modifications that are important for the epigenetic regulation of gene expression. Mainly expressed by medullary thymic epithelial cells (mTECs), induces the expression of thousands of tissue-restricted proteins, which are presented on major histocompatibility complex class I (MHC-I) and MHC-II molecules to developing T-cells percolating through the thymic medulla. Also induces self-tolerance through other mechanisms such as the regulation of the mTEC differentiation program. Controls the medullary accumulation of thymic dendritic cells and the development of regulatory T-cell through the regulation of XCL1 expression. Regulates the production of CCR4 and CCR7 ligands in medullary thymic epithelial cells and alters the coordinated maturation and migration of thymocytes. In thimic B-cells, allows the presentation of licensing-dependent endogenous self-anitgen for negative selection. In secondary lymphoid organs, induces functional inactivation of CD4(+) T-cells. Expressed by a distinct bone marrow-derived population, induces self-tolerance through a mechanism that does not require regulatory T-cells and is resitant to innate inflammatory stimuli. This is Autoimmune regulator (Aire) from Mus musculus (Mouse).